Here is a 1243-residue protein sequence, read N- to C-terminus: Inositol hexakisphosphate and diphosphoinositol-pentakisphosphate kinase 2 (1243 aa).

Residue S38 is modified to Phosphoserine. Substrate is bound at residue 53–54 (KK). ATP-binding residues include R134, K187, H194, and R213. 213-214 (RK) contacts substrate. S223 bears the Phosphoserine mark. Residues 237 to 240 (EEFM) and 246 to 248 (DVK) contribute to the ATP site. K248 and R262 together coordinate substrate. Residues S264, D309, and 321–323 (DVN) contribute to the ATP site. 326 to 329 (SFVK) contacts substrate. Residues 371–442 (PTTSGTMMEL…VLDIARQLLM (72 aa)) are polyphosphoinositide-binding domain. 2 disordered regions span residues 898–941 (KGCE…RDEV) and 957–1016 (HIHR…SPVS). Basic and acidic residues predominate over residues 915–941 (ASRENEGRRPFKIDNDDEPHTSKRDEV). Positions 958–969 (IHRKSPLPRSRK) are enriched in basic residues. Phosphoserine is present on residues S1006, S1016, S1074, S1091, S1165, S1172, and S1180. Residues 1185-1243 (TPAKILPTPPATLKSTKASSKPATSGPSSAVVPNTSSRKKNITSKTETHEHKKNTGKKK) are disordered. The segment covering 1195–1209 (ATLKSTKASSKPATS) has biased composition (low complexity). Polar residues predominate over residues 1210–1220 (GPSSAVVPNTS). Phosphoserine occurs at positions 1220 and 1221.

The protein belongs to the histidine acid phosphatase family. VIP1 subfamily.

The protein localises to the cytoplasm. It is found in the cytosol. The catalysed reaction is 1D-myo-inositol hexakisphosphate + ATP = 1-diphospho-1D-myo-inositol 2,3,4,5,6-pentakisphosphate + ADP. It catalyses the reaction 5-diphospho-1D-myo-inositol 1,2,3,4,6-pentakisphosphate + ATP + H(+) = 1,5-bis(diphospho)-1D-myo-inositol 2,3,4,6-tetrakisphosphate + ADP. Bifunctional inositol kinase that acts in concert with the IP6K kinases IP6K1, IP6K2 and IP6K3 to synthesize the diphosphate group-containing inositol pyrophosphates diphosphoinositol pentakisphosphate, PP-InsP5, and bis-diphosphoinositol tetrakisphosphate, (PP)2-InsP4. PP-InsP5 and (PP)2-InsP4, also respectively called InsP7 and InsP8, regulate a variety of cellular processes, including apoptosis, vesicle trafficking, cytoskeletal dynamics, exocytosis, insulin signaling and neutrophil activation. Phosphorylates inositol hexakisphosphate (InsP6) at position 1 to produce PP-InsP5 which is in turn phosphorylated by IP6Ks to produce (PP)2-InsP4. Alternatively, phosphorylates PP-InsP5 at position 1, produced by IP6Ks from InsP6, to produce (PP)2-InsP4. Required for normal hearing. The sequence is that of Inositol hexakisphosphate and diphosphoinositol-pentakisphosphate kinase 2 from Homo sapiens (Human).